Consider the following 440-residue polypeptide: Argininosuccinate lyase (440 aa).

The protein belongs to the lyase 1 family. Argininosuccinate lyase subfamily.

It is found in the cytoplasm. It carries out the reaction 2-(N(omega)-L-arginino)succinate = fumarate + L-arginine. The protein operates within amino-acid biosynthesis; L-arginine biosynthesis; L-arginine from L-ornithine and carbamoyl phosphate: step 3/3. The polypeptide is Argininosuccinate lyase (Clostridium botulinum (strain Langeland / NCTC 10281 / Type F)).